Reading from the N-terminus, the 37-residue chain is Large ribosomal subunit protein bL36c (37 aa).

This sequence belongs to the bacterial ribosomal protein bL36 family.

It localises to the plastid. The protein resides in the chloroplast. The sequence is that of Large ribosomal subunit protein bL36c from Cyanidioschyzon merolae (strain NIES-3377 / 10D) (Unicellular red alga).